Reading from the N-terminus, the 245-residue chain is tRNA pseudouridine synthase A (245 aa).

The active-site Nucleophile is Asp-52. Tyr-111 contributes to the substrate binding site.

It belongs to the tRNA pseudouridine synthase TruA family. As to quaternary structure, homodimer.

It catalyses the reaction uridine(38/39/40) in tRNA = pseudouridine(38/39/40) in tRNA. In terms of biological role, formation of pseudouridine at positions 38, 39 and 40 in the anticodon stem and loop of transfer RNAs. This chain is tRNA pseudouridine synthase A, found in Rickettsia prowazekii (strain Madrid E).